A 258-amino-acid polypeptide reads, in one-letter code: Snake venom serine protease 1 (258 aa).

The signal sequence occupies residues 1 to 18 (MVLIRVLANLLILQLSYA). The propeptide occupies 19-24 (QKSSEL). Residues 25-249 (VVGGDECNIN…YNDWIKSIIA (225 aa)) form the Peptidase S1 domain. Disulfide bonds link cysteine 31–cysteine 163, cysteine 50–cysteine 66, cysteine 98–cysteine 256, cysteine 142–cysteine 210, cysteine 174–cysteine 189, and cysteine 200–cysteine 225. N-linked (GlcNAc...) asparagine glycosylation occurs at asparagine 44. Residues histidine 65 and aspartate 110 each act as charge relay system in the active site. Residue serine 204 is the Charge relay system of the active site.

This sequence belongs to the peptidase S1 family. Snake venom subfamily. As to quaternary structure, monomer. In terms of tissue distribution, expressed by the venom gland.

It is found in the secreted. Functionally, snake venom serine protease that may act in the hemostasis system of the prey. The polypeptide is Snake venom serine protease 1 (TLG1) (Craspedocephalus gramineus (Bamboo pit viper)).